Reading from the N-terminus, the 383-residue chain is Lipid-A-disaccharide synthase (383 aa).

It belongs to the LpxB family.

The catalysed reaction is a lipid X + a UDP-2-N,3-O-bis[(3R)-3-hydroxyacyl]-alpha-D-glucosamine = a lipid A disaccharide + UDP + H(+). The protein operates within bacterial outer membrane biogenesis; LPS lipid A biosynthesis. In terms of biological role, condensation of UDP-2,3-diacylglucosamine and 2,3-diacylglucosamine-1-phosphate to form lipid A disaccharide, a precursor of lipid A, a phosphorylated glycolipid that anchors the lipopolysaccharide to the outer membrane of the cell. This is Lipid-A-disaccharide synthase from Aliivibrio salmonicida (strain LFI1238) (Vibrio salmonicida (strain LFI1238)).